A 181-amino-acid chain; its full sequence is HGPRTase-like protein 2 (181 aa).

Belongs to the purine/pyrimidine phosphoribosyltransferase family. Archaeal HPRT subfamily.

Functionally, may catalyze a purine salvage reaction, the substrate is unknown. The chain is HGPRTase-like protein 2 from Haloquadratum walsbyi (strain DSM 16854 / JCM 12705 / C23).